Reading from the N-terminus, the 177-residue chain is Large ribosomal subunit protein uL6 (177 aa).

It belongs to the universal ribosomal protein uL6 family. Part of the 50S ribosomal subunit.

This protein binds to the 23S rRNA, and is important in its secondary structure. It is located near the subunit interface in the base of the L7/L12 stalk, and near the tRNA binding site of the peptidyltransferase center. The chain is Large ribosomal subunit protein uL6 from Salmonella newport (strain SL254).